We begin with the raw amino-acid sequence, 616 residues long: MALLSVAPLQKPLTSCSPFSTTMPTLGVCTPRKVVTPSIIMCSTTAVSDAGAKRRIANHHSNLWGDDFIHSLSTHYEAPSYRERAERLIKEVKEMFTEIEDGLSITPLSDLLSRLSMVDSIERLGIDRHFKMEIKSALDYVHSYWSEKGIGCGRESGVTDLNSTALGLRTLRLHGYPVSSSVLEQFKDEKGQFATSSIQTDGGEIRSIFNLFRASLVAFPNEKVMEDAQIFSTIYLKEYLEKIPLSSLSRQIEYVMEYGWHTNLPRLEARHYMDVFGYNEMPWMSYGNTEKLLELAKLEFNIFHSIQQRELKHISRWWKDSGFSQMNFVRHRHVEYYTLASCFAIDPQHSAFRVSFAKMCHLVTVLDDIYDTFGTMEELQLFTAAVKRWDPSATDSLPEYMKRVYTVLYETVNEMAQVAKKSQGRDTINYARHAWEAYLDSYMKEAEWISTGCLPTFEEYYENGKISFGYRISMLQPILSMDIPFPHHILQEIDYPSRFSSLAAGILRLKGDTRCYQADSARGEEASCISCYMKENPGLTEEDVVNHIHGMVDDLIKELNWELLKPDCNVPISSKKHAFDICRAVHHGYKYRDGYSVATNEIKDLVMITVLEPVPL.

Residues 1 to 41 constitute a chloroplast transit peptide; that stretch reads MALLSVAPLQKPLTSCSPFSTTMPTLGVCTPRKVVTPSIIM. Mg(2+)-binding residues include Asp367, Asp371, and Asp519. The short motif at 367-371 is the DDXXD motif element; that stretch reads DDIYD.

Belongs to the terpene synthase family. Tpsd subfamily. Mg(2+) serves as cofactor. Requires Mn(2+) as cofactor.

The protein resides in the plastid. It is found in the chloroplast. The catalysed reaction is (2E)-geranyl diphosphate + H2O = (S)-alpha-terpineol + diphosphate. The enzyme catalyses (2E)-geranyl diphosphate + H2O = 1,8-cineole + diphosphate. It carries out the reaction (2E)-geranyl diphosphate = beta-myrcene + diphosphate. It catalyses the reaction (2E)-geranyl diphosphate = (1S,5S)-sabinene + diphosphate. Its pathway is terpene metabolism; oleoresin biosynthesis. It functions in the pathway secondary metabolite biosynthesis; terpenoid biosynthesis. Its function is as follows. Monoterpene synthase (TPS) involved in the biosynthesis of monoterpene natural products included in conifer oleoresin secretions and volatile emissions; these compounds contribute to biotic and abiotic stress defense against herbivores and pathogens. Catalyzes the conversion of (2E)-geranyl diphosphate (GPP) to alpha-terpineol and, to a lower extent, to 1,8-cineole, myrcene and (-)-sabinene. This Pinus contorta (Shore pine) protein is Alpha terpineol synthase, chloroplastic.